A 192-amino-acid polypeptide reads, in one-letter code: FMN-dependent NADH:quinone oxidoreductase 1 (192 aa).

Residues Ser-9 and 15 to 17 contribute to the FMN site; that span reads SYS.

This sequence belongs to the azoreductase type 1 family. Homodimer. FMN serves as cofactor.

The catalysed reaction is 2 a quinone + NADH + H(+) = 2 a 1,4-benzosemiquinone + NAD(+). The enzyme catalyses N,N-dimethyl-1,4-phenylenediamine + anthranilate + 2 NAD(+) = 2-(4-dimethylaminophenyl)diazenylbenzoate + 2 NADH + 2 H(+). Quinone reductase that provides resistance to thiol-specific stress caused by electrophilic quinones. Functionally, also exhibits azoreductase activity. Catalyzes the reductive cleavage of the azo bond in aromatic azo compounds to the corresponding amines. In Colwellia psychrerythraea (strain 34H / ATCC BAA-681) (Vibrio psychroerythus), this protein is FMN-dependent NADH:quinone oxidoreductase 1.